The primary structure comprises 1605 residues: MADTCVQVALRIRPQGNREKLEGSRVCTSVLPNDPQVTIGGDRSFTYDHVFDMPTLQYVVYESCVEKLVDGLFDGYNATVLAYGQTGSGKTHTMGTAFDAAVTQKEEDLGVIPRAIQHTFRKIAECKAQAIEQGLLEPAFEVSVQFVELYNDDVLDLLSDDRSMSSSIRIHEDSRGEIVLHGVEQRSVFDMHGTMDILKNGALNRTVAATNMNEQSSRSHAIFTLHLKQQRVAANPLDESGEQKTGELEMEMLCAKFHFVDLAGSERMKRTGATGDRAKEGISINVGLLALGNVIAALGGANGKVSHVPYRDSKLTRLLQDSLGGNSRTLMIACCSPSDSDFVETLNTMKYANRAKEIKNKVVANQDKSSKMIGELRSRIAALEAELLEFKQGRRTVDVDGHEVVNDQYHENVYLTSEVNHLRFRVKALNETLDILRTENIDLKAKQEFNSIASLPTAGSGGAEGEVDAIQSTFRKYLEELERTKSLLYESQSTCDQLRKDNARWKALGASRGSGGGNAEFNSQKLIEMAKQEVEKQRKLMESVNIGGENVSSEYSSMAQDEDGTSNEAEELLDEEDLDEDEDETAEEKQEQEESEALQIDLSEVMIELDIKEKLIDQLERAERQNQQIRETYEKKLRELMERIKDTETERDRVLNEGGKRGGNNEQMKAIKQEYELKITDLRKELKKIEALDKEHLKVIAKSQRELQEKTRLKSEVVDLKKAKVELIKKMNEDKKKQKTQQLANARAFATKEKQTRLQANKIRTLEMKDKQREQFLKKTTQEVNALRKEKAVAAATARQANRGTPRGGAAVTNSPARRVRGVVGGVQAIKELAFSAKASKVKWDVIVRKIEESARRRQIVQKMEAELERYLNERHAVMVEIVENEKQFTQSQDVIYRDGLLEAIDSAKQKLQYVQDQITYQQKLICDVDEDITASNAENEPILDVGLKKQTIKQLFDGCDTLSEARYLLQHLFDLCIDKAALAAKVESEFKECAARIEQLEQQSSLKEQLLTSIIEDKNLVDEIEGFVPSDLRKSRTSSQSSLLRSGSPSVVEDAHTLQNYKVRRHTATQEELLFANSEENSMVSDANANPTVDVGADVGDSDERKEKKKRIAFVSTSPASTSFANSTSQSPSFSRNTRFRSTVGGVSNNNNIRKSVQPLINGKGVSSTARKGISRLPSVTEDPEIGIFAKSFPGRSRSNLMSSSSSTTTTTLSSSNLLNPRGTTSSSSSKSVFARISPSWLSDTCAELIMRNNNRKQSRIVPVKDGMRGNVITRTHTLEGHARGVLSVDVNEKLMVTGSKDRTAKLWDIEACREIRTLGIHPNNVHLVKFVPFSNYVFTFSMFEARAWDYRTPECICVKVLNSSGQVNEGDSIDVSQVMPRQNTIPFLETLITAADVDPTGQLLFTSFSAYVRVWNLREWKPLGRLNAASHSPKSEVSCLRTTMTPEGSILAYTGSRDHYVKEYEVGLGTGVIESKCEFTPPHYDNVTAVLPLNGHLYTASKDVNIMKFSLKDGKREHLELRAHQQYIQSLTGFGPKGKELLVSACKDGTIRFWDVGSSSRMKLVEEYSKAHQEGINDMCSTKSMLFTASGDSTVGFWKSNAV.

Residues 5–358 (CVQVALRIRP…MKYANRAKEI (354 aa)) form the Kinesin motor domain. Residue 84–91 (GQTGSGKT) coordinates ATP. Mg(2+)-binding residues include T91 and S217. Disordered regions lie at residues 548–596 (GENV…EESE), 1085–1152 (VSDA…SNNN), and 1198–1232 (SRSNLMSSSSSTTTTTLSSSNLLNPRGTTSSSSSK). Over residues 550–559 (NVSSEYSSMA) the composition is skewed to polar residues. Over residues 560–596 (QDEDGTSNEAEELLDEEDLDEDEDETAEEKQEQEESE) the composition is skewed to acidic residues. Residues 575–730 (EEDLDEDEDE…KKAKVELIKK (156 aa)) adopt a coiled-coil conformation. Residues 1116 to 1152 (VSTSPASTSFANSTSQSPSFSRNTRFRSTVGGVSNNN) show a composition bias toward polar residues. Positions 1200 to 1232 (SNLMSSSSSTTTTTLSSSNLLNPRGTTSSSSSK) are enriched in low complexity. WD repeat units lie at residues 1282–1319 (GHARGVLSVDVNEKLMVTGSKDRTAKLWDIEACREIRT), 1389–1427 (FLETLITAADVDPTGQLLFTSFSAYVRVWNLREWKPLGR), 1525–1566 (AHQQ…RMKL), and 1573–1605 (AHQEGINDMCSTKSMLFTASGDSTVGFWKSNAV).

This sequence belongs to the TRAFAC class myosin-kinesin ATPase superfamily. Kinesin family. In terms of assembly, component of a complex at least composed of alpha tubulin and beta tubulin. Within the complex, interacts with the alpha tubulin and beta tubulin dimer.

It localises to the cytoplasm. It is found in the cytoskeleton. In terms of biological role, microtubule-binding motor protein which has ATPase activity. In complex with alpha and beta tubulins, preferentially binds to the growing microtubule plus-end to stabilize it and detaches following ATP hydrolysis. Negatively regulates axonal length through inhibiting microtubule polymerization at its plus-end. The sequence is that of Kinesin-like protein klp-12 from Caenorhabditis elegans.